Here is a 511-residue protein sequence, read N- to C-terminus: Sporulation-specific chitinase 2 (511 aa).

Residues 1-34 (MVGHSAQHRSKSSLVSHLLILLIFITIIIEMCLY) form the signal peptide. Positions 73–472 (FISGVYYSNW…NAFNEGLHFN (400 aa)) constitute a GH18 domain. N147 carries an N-linked (GlcNAc...) asparagine glycan. E223 serves as the catalytic Proton donor. N-linked (GlcNAc...) asparagine glycosylation is found at N228, N456, and N472.

Belongs to the glycosyl hydrolase 18 family. Chitinase class III subfamily.

It is found in the secreted. The catalysed reaction is Random endo-hydrolysis of N-acetyl-beta-D-glucosaminide (1-&gt;4)-beta-linkages in chitin and chitodextrins.. The protein is Sporulation-specific chitinase 2 (CTS2) of Saccharomyces cerevisiae (strain ATCC 204508 / S288c) (Baker's yeast).